The primary structure comprises 174 residues: Mitochondrial protein import protein ZIM17 (174 aa).

The N-terminal 47 residues, 1–47 (MIPRTRTLLQSKIPITRYFARCWAPRVRYNVCRTLPAAALHTNIIAH), are a transit peptide targeting the mitochondrion. The segment at 64-159 (VDKPKMMIAF…LKDVLGKYAK (96 aa)) adopts a DNL-type zinc-finger fold. The Zn(2+) site is built by Cys-75, Cys-78, Cys-100, and Cys-103.

Interacts with SSC1; binds to the nucleotide-free state as well as to the ADP- or ATP-bound state of SSC1. It depends on Zn(2+) as a cofactor.

It is found in the mitochondrion inner membrane. In terms of biological role, involved in protein import into mitochondria. Acts as a Hsp70-specific chaperone that prevents self-aggregation of the matrix Hsp70 chaperones SSC1 (mtHSP70) and SSQ1, thereby maintaining their function in mitochondrial protein import and Fe/S protein biosynthesis. May act together with PAM18 as co-chaperone to facilitate recognition and folding of imported proteins by SSC1 in the mitochondrial matrix. This Saccharomyces cerevisiae (strain AWRI1631) (Baker's yeast) protein is Mitochondrial protein import protein ZIM17 (ZIM17).